A 310-amino-acid chain; its full sequence is MASKDFAIGMILSQIMVGFLGNFFLLYHYSFLHFTRGMLQSTDLTLKHLTIANSLVILSKGIPQTMAAFGLKDSLSDIGCKFVFYVHRVGRAVCTGNACLLSVFQVITISSSEFRWAELKLHAHKYIRSFILVLCWILNTLVNITVPLHVTGKWNSINSTKTNDYGYCSGGSRSRIPHSLHIVLLSSLDVLCLGLMTLASGSMVFILHRLKQQVQHIHGTNLSPRSSPESRVTQSILVLVSTLCYFTRSPPSLHMSLFPNPSWWPLNASALITACFPTVSPFVLMSRHPRIPRLGSACCGRNPQFPKLVR.

The Extracellular segment spans residues 1–5 (MASKD). A helical membrane pass occupies residues 6–26 (FAIGMILSQIMVGFLGNFFLL). Residues 27 to 50 (YHYSFLHFTRGMLQSTDLTLKHLT) are Cytoplasmic-facing. The helical transmembrane segment at 51 to 71 (IANSLVILSKGIPQTMAAFGL) threads the bilayer. Residues 72 to 91 (KDSLSDIGCKFVFYVHRVGR) lie on the Extracellular side of the membrane. The helical transmembrane segment at 92-112 (AVCTGNACLLSVFQVITISSS) threads the bilayer. The Cytoplasmic portion of the chain corresponds to 113–129 (EFRWAELKLHAHKYIRS). A helical membrane pass occupies residues 130-150 (FILVLCWILNTLVNITVPLHV). Residues 151 to 186 (TGKWNSINSTKTNDYGYCSGGSRSRIPHSLHIVLLS) lie on the Extracellular side of the membrane. N158 is a glycosylation site (N-linked (GlcNAc...) asparagine). Residues 187–207 (SLDVLCLGLMTLASGSMVFIL) form a helical membrane-spanning segment. The Cytoplasmic portion of the chain corresponds to 208-235 (HRLKQQVQHIHGTNLSPRSSPESRVTQS). Residues 236–258 (ILVLVSTLCYFTRSPPSLHMSLF) form a helical membrane-spanning segment. At 259–263 (PNPSW) the chain is on the extracellular side. The helical transmembrane segment at 264–284 (WPLNASALITACFPTVSPFVL) threads the bilayer. Residues 285–310 (MSRHPRIPRLGSACCGRNPQFPKLVR) lie on the Cytoplasmic side of the membrane.

It belongs to the G-protein coupled receptor 1 family.

The protein localises to the cell membrane. Putative pheromone receptor. The polypeptide is Vomeronasal type-1 receptor 3 (VN1R3) (Pan troglodytes (Chimpanzee)).